A 156-amino-acid chain; its full sequence is Glutamate-rich protein 2 (156 aa).

Disordered stretches follow at residues 29 to 66 (LQDI…TQAP) and 116 to 156 (EKTQ…EDGS). Composition is skewed to acidic residues over residues 39-56 (SAED…DDED) and 140-156 (SDEE…EDGS).

This Homo sapiens (Human) protein is Glutamate-rich protein 2 (ERICH2).